The sequence spans 309 residues: Protoheme IX farnesyltransferase 2 (309 aa).

Helical transmembrane passes span 35–55, 59–79, 107–127, 131–151, 159–179, 186–206, 238–258, and 289–309; these read FKVV…APDV, MGVQ…AAVI, AHAL…LMLW, LTAI…TSFL, IVIG…SETG, WLLV…LAIA, LLAI…IYLI, and FSII…WLLL.

The protein belongs to the UbiA prenyltransferase family. Protoheme IX farnesyltransferase subfamily.

It localises to the cell inner membrane. It carries out the reaction heme b + (2E,6E)-farnesyl diphosphate + H2O = Fe(II)-heme o + diphosphate. It functions in the pathway porphyrin-containing compound metabolism; heme O biosynthesis; heme O from protoheme: step 1/1. Functionally, converts heme B (protoheme IX) to heme O by substitution of the vinyl group on carbon 2 of heme B porphyrin ring with a hydroxyethyl farnesyl side group. This is Protoheme IX farnesyltransferase 2 from Pseudoalteromonas translucida (strain TAC 125).